A 409-amino-acid chain; its full sequence is WW domain-containing oxidoreductase (409 aa).

The disordered stretch occupies residues 1–23 (MIALPDTDSEDELPPGWEERATD). WW domains are found at residues 11 to 44 (DELP…HPRT) and 52 to 86 (GELP…DPRL). Residue 128 to 134 (GANCGIG) coordinates NADP(+). Position 257 (Ser-257) interacts with substrate. The active-site Proton acceptor is Tyr-288.

It belongs to the short-chain dehydrogenases/reductases (SDR) family.

The protein resides in the cytoplasm. It localises to the mitochondrion. The protein localises to the golgi apparatus. Its subcellular location is the lysosome. Putative oxidoreductase. May control genotoxic stress-induced cell death. May play a role in TGFB1 signaling and TGFB1-mediated cell death. May also play a role in tumor necrosis factor (TNF)-mediated cell death. May play a role in Wnt signaling. In Drosophila melanogaster (Fruit fly), this protein is WW domain-containing oxidoreductase (Wwox).